Reading from the N-terminus, the 98-residue chain is NADH-ubiquinone oxidoreductase chain 4L (98 aa).

Transmembrane regions (helical) follow at residues 1–21, 26–46, and 59–79; these read MTLVHMNLLLAFAMSLTGLLM, LMSALLCLEGMVLSLFILATI, and MPIILLVFAACEAAIGLALLV.

Belongs to the complex I subunit 4L family. In terms of assembly, core subunit of respiratory chain NADH dehydrogenase (Complex I) which is composed of 45 different subunits.

The protein localises to the mitochondrion inner membrane. It carries out the reaction a ubiquinone + NADH + 5 H(+)(in) = a ubiquinol + NAD(+) + 4 H(+)(out). Its function is as follows. Core subunit of the mitochondrial membrane respiratory chain NADH dehydrogenase (Complex I) which catalyzes electron transfer from NADH through the respiratory chain, using ubiquinone as an electron acceptor. Part of the enzyme membrane arm which is embedded in the lipid bilayer and involved in proton translocation. The chain is NADH-ubiquinone oxidoreductase chain 4L (MT-ND4L) from Pontoporia blainvillei (Franciscana).